The chain runs to 471 residues: Protein hedgehog (471 aa).

A lipid anchor (N-palmitoyl cysteine) is attached at C85. Ca(2+)-binding residues include E149, E150, D155, T185, E186, D189, and D191. The Cholesterol glycine ester moiety is linked to residue G257.

Belongs to the hedgehog family. As to quaternary structure, interacts with shf. Interacts with ptc and CG5504/l(2)tid. Post-translationally, the C-terminal part of the hedgehog protein precursor displays an autoproteolysis activity that results in the cleavage of the full-length protein into two parts (N-product and C-product). In addition, the C-terminal part displays a cholesterol transferase activity that results by the covalent attachment of a cholesterol moiety to the C-terminal of the newly generated N-product. The N-product is the active species in both local and long-range signaling, whereas the C-product has no signaling activity. Cholesterylation is required for N-product targeting to lipid rafts and multimerization. In terms of processing, N-palmitoylation by Rasp of the hedgehog N-product, within the secretory pathway, is required for the embryonic and larval patterning activities of the hedgehog signal. In embryos, expression starts at stage 5 as a few stripes at the anterior and posterior ends, this expands to 17 stripes during stages 8-11. Expression is also seen in CNS and some PNS cells until stage 13-14, and in foregut, hindgut and salivary glands. In larvae, expression is seen in the posterior compartment of the wing, leg and antennal imaginal disks. In adults, high level of expression in specific regions of the proventriculus and hindgut, with slightly lower levels of expression in the posterior midgut. Relatively low levels of expression in the anterior midgut region.

The protein resides in the nucleus. The protein localises to the cytoplasm. It is found in the cell membrane. It catalyses the reaction glycyl-L-cysteinyl-[protein] + cholesterol + H(+) = [protein]-C-terminal glycyl cholesterol ester + N-terminal L-cysteinyl-[protein]. Functionally, the C-terminal part of the hedgehog protein precursor displays an autoproteolysis activity that results in the cleavage of the full-length protein into two parts (N-product and C-product). In addition, the C-terminal part displays a cholesterol transferase activity that results by the covalent attachment of a cholesterol moiety to the C-terminal of the newly generated N-product. Once cleaved, the C-product has no signaling activity and diffuses from the cell. The dually lipidated hedgehog protein N-product is a morphogen which is essential for a variety of patterning events during development. Establishes the anterior-posterior axis of the embryonic segments and patterns the larval imaginal disks. Binds to the patched (ptc) receptor, which functions in association with smoothened (smo), to activate the transcription of target genes wingless (wg), decapentaplegic (dpp) and ptc. In the absence of hh, ptc represses the constitutive signaling activity of smo through fused (fu). Essential component of a signaling pathway which regulates the Duox-dependent gut immune response to bacterial uracil; required to activate Cad99C-dependent endosome formation, norpA-dependent Ca2+ mobilization and p38 MAPK, which are essential steps in the Duox-dependent production of reactive oxygen species (ROS) in response to intestinal bacterial infection. During photoreceptor differentiation, it up-regulates transcription of Ubr3, which in turn promotes the hh-signaling pathway by mediating the ubiquitination and degradation of cos. The chain is Protein hedgehog from Drosophila melanogaster (Fruit fly).